Reading from the N-terminus, the 152-residue chain is Snaclec coagulation factor IX/factor X-binding protein subunit A (152 aa).

An N-terminal signal peptide occupies residues 1–23 (MGRFIFVSFGLLVVAASLSGTGA). 3 disulfides stabilise this stretch: Cys25/Cys36, Cys53/Cys150, and Cys125/Cys142. Residues 32 to 151 (YEGHCYKAFE…CGQRIPFVCE (120 aa)) enclose the C-type lectin domain. Ca(2+)-binding residues include Ser64, Glu66, and Glu70. Residue Glu151 participates in Ca(2+) binding.

This sequence belongs to the snaclec family. Heterodimer of subunits A and B; disulfide-linked. Expressed by the venom gland.

It localises to the secreted. Functionally, anticoagulant protein which binds to the gamma-carboxyglutamic acid-domain regions of factors IX (F9) and factor X (F10) in the presence of calcium with a 1 to 1 stoichiometry. In Trimeresurus stejnegeri (Chinese green tree viper), this protein is Snaclec coagulation factor IX/factor X-binding protein subunit A.